A 333-amino-acid chain; its full sequence is Fructose-1,6-bisphosphatase class 1 1 (333 aa).

Glu-81, Asp-100, Leu-102, and Asp-103 together coordinate Mg(2+). Residues 103 to 106 (DGSS) and Asn-191 each bind substrate. Glu-263 lines the Mg(2+) pocket.

It belongs to the FBPase class 1 family. As to quaternary structure, homotetramer. Mg(2+) is required as a cofactor.

The protein resides in the cytoplasm. The enzyme catalyses beta-D-fructose 1,6-bisphosphate + H2O = beta-D-fructose 6-phosphate + phosphate. It functions in the pathway carbohydrate biosynthesis; gluconeogenesis. Fructose-1,6-bisphosphatase II is not light-activated. The polypeptide is Fructose-1,6-bisphosphatase class 1 1 (Cereibacter sphaeroides (Rhodobacter sphaeroides)).